Consider the following 136-residue polypeptide: Nucleoside diphosphate kinase (136 aa).

K10, F58, R86, T92, R104, and N114 together coordinate ATP. H117 acts as the Pros-phosphohistidine intermediate in catalysis.

Belongs to the NDK family. As to quaternary structure, homotetramer. Mg(2+) is required as a cofactor.

It is found in the cytoplasm. It carries out the reaction a 2'-deoxyribonucleoside 5'-diphosphate + ATP = a 2'-deoxyribonucleoside 5'-triphosphate + ADP. It catalyses the reaction a ribonucleoside 5'-diphosphate + ATP = a ribonucleoside 5'-triphosphate + ADP. Functionally, major role in the synthesis of nucleoside triphosphates other than ATP. The ATP gamma phosphate is transferred to the NDP beta phosphate via a ping-pong mechanism, using a phosphorylated active-site intermediate. The protein is Nucleoside diphosphate kinase of Saccharopolyspora erythraea (strain ATCC 11635 / DSM 40517 / JCM 4748 / NBRC 13426 / NCIMB 8594 / NRRL 2338).